Consider the following 136-residue polypeptide: Histone H3.Y (136 aa).

A compositionally biased stretch (low complexity) spans 1–16; it reads MARTKQTARKATAWQA. The interval 1–43 is disordered; sequence MARTKQTARKATAWQAPRKPLATKAAGKRAPPTGGIKKPHRYK. At R3 the chain carries Asymmetric dimethylarginine. At R3 the chain carries Citrulline; alternate. T4 bears the Phosphothreonine mark. K5 carries the allysine; alternate modification. At K5 the chain carries N6,N6,N6-trimethyllysine; alternate. An N6,N6-dimethyllysine; alternate modification is found at K5. K5 bears the N6-(2-hydroxyisobutyryl)lysine; alternate mark. K5 is subject to N6-(beta-hydroxybutyryl)lysine; alternate. N6-acetyllysine; alternate is present on K5. K5 is modified (N6-crotonyllysine; alternate). An N6-methyllysine; alternate modification is found at K5. Q6 bears the 5-glutamyl dopamine; alternate mark. Position 6 is a 5-glutamyl serotonin; alternate (Q6). T7 carries the phosphothreonine modification. A Citrulline; alternate modification is found at R9. A Symmetric dimethylarginine modification is found at R9. K10 carries the N6,N6,N6-trimethyllysine; alternate modification. K10 carries the N6,N6-dimethyllysine; alternate modification. K10 is subject to N6-(2-hydroxyisobutyryl)lysine; alternate. K10 is subject to N6-(beta-hydroxybutyryl)lysine; alternate. An N6-acetyllysine; alternate modification is found at K10. K10 carries the post-translational modification N6-crotonyllysine; alternate. K10 carries the post-translational modification N6-methyllysine; alternate. K10 carries the N6-butyryllysine; alternate modification. K10 carries the post-translational modification N6-lactoyllysine; alternate. At T12 the chain carries Phosphothreonine. R18 is modified (asymmetric dimethylarginine). Position 18 is a citrulline; alternate (R18). 4 positions are modified to N6-(2-hydroxyisobutyryl)lysine; alternate: K19, K24, K28, and K37. 3 positions are modified to N6-(beta-hydroxybutyryl)lysine; alternate: K19, K24, and K28. An N6-acetyllysine; alternate mark is found at K19, K24, K28, and K37. N6-crotonyllysine; alternate occurs at positions 19, 24, and 28. 4 positions are modified to N6-methyllysine; alternate: K19, K24, K28, and K37. N6-butyryllysine; alternate is present on residues K19 and K24. N6-lactoyllysine; alternate is present on residues K19, K24, and K28. N6-glutaryllysine; alternate occurs at positions 19, 24, and 28. N6,N6,N6-trimethyllysine; alternate occurs at positions 28 and 37. N6,N6-dimethyllysine; alternate is present on residues K28 and K37. N6-methyllysine is present on K38. Y42 carries the post-translational modification Phosphotyrosine. N6,N6,N6-trimethyllysine; alternate is present on K57. K57 carries the N6-(2-hydroxyisobutyryl)lysine; alternate modification. The residue at position 57 (K57) is an N6-(beta-hydroxybutyryl)lysine; alternate. K57 carries the N6-acetyllysine; alternate modification. K57 carries the N6-crotonyllysine; alternate modification. The residue at position 57 (K57) is an N6-lactoyllysine; alternate. K57 carries the post-translational modification N6-glutaryllysine; alternate. N6-methyllysine is present on K57. K57 bears the N6-succinyllysine; alternate mark. S58 carries the post-translational modification Phosphoserine. K65 bears the N6-(2-hydroxyisobutyryl)lysine; alternate mark. N6-methyllysine; alternate is present on K65. S87 carries the phosphoserine modification. T108 carries the phosphothreonine modification.

This sequence belongs to the histone H3 family. In terms of assembly, the nucleosome is a histone octamer containing two molecules each of H2A, H2B, H3 and H4 assembled in one H3-H4 heterotetramer and two H2A-H2B heterodimers. The octamer wraps approximately 147 bp of DNA. Interacts with HIRA, a chaperone required for its incorporation into nucleosomes. Does not interact with DAXX chaperone. Post-translationally, acetylation is generally linked to gene activation. Acetylation on Lys-10 (H3K9ac) impairs methylation at Arg-9 (H3R8me2s). Acetylation on Lys-19 (H3K18ac) and Lys-24 (H3K24ac) favors methylation at Arg-18 (H3R17me). Citrullination at Arg-9 (H3R8ci) and/or Arg-18 (H3R17ci) impairs methylation and represses transcription. In terms of processing, asymmetric dimethylation at Arg-18 (H3R17me2a) is linked to gene activation. Symmetric dimethylation at Arg-9 (H3R8me2s) is linked to gene repression. Asymmetric dimethylation at Arg-3 (H3R2me2a) is linked to gene repression and is mutually exclusive with H3 Lys-5 methylation (H3K4me2 and H3K4me3). H3R2me2a is present at the 3' of genes regardless of their transcription state and is enriched on inactive promoters, while it is absent on active promoters. Post-translationally, methylation at Lys-5 (H3K4me) facilitates subsequent acetylation of H3 and H4. Methylation at Lys-10 (H3K9me) and Lys-28 (H3K27me), which are linked to gene repression, are underrepresented. Methylation at Lys-10 (H3K9me) is a specific target for HP1 proteins (CBX1, CBX3 and CBX5) and prevents subsequent acetylation of H3 and H4. Phosphorylation at Thr-7 (H3T6ph) is a specific tag for epigenetic transcriptional activation that prevents demethylation of Lys-5 (H3K4me) by LSD1/KDM1A. At centromeres, specifically phosphorylated at Thr-12 (H3T11ph) from prophase to early anaphase. Phosphorylation at Thr-12 (H3T11ph) is a specific tag for epigenetic transcriptional activation that promotes demethylation of Lys-10 (H3K9me). Phosphorylation at Tyr-42 (H3Y41ph) promotes exclusion of CBX5 (HP1 alpha) from chromatin. In terms of processing, lysine deamination at Lys-5 (H3K4all) to form allysine. Allysine formation only takes place on H3K4me3 and results in gene repression. Post-translationally, crotonylation (Kcr) is specifically present in male germ cells and marks testis-specific genes in post-meiotic cells, including X-linked genes that escape sex chromosome inactivation in haploid cells. Crotonylation marks active promoters and enhancers and confers resistance to transcriptional repressors. It is also associated with post-meiotically activated genes on autosomes. Butyrylation of histones marks active promoters and competes with histone acetylation. It is present during late spermatogenesis. As to expression, expressed at low level in some tissues, such as testis and brain.

Its subcellular location is the nucleus. The protein localises to the chromosome. Its function is as follows. Primate-specific variant histone H3, which constitutes a core component of nucleosomes. Histone H3.Y-containing nucleosomes accumulate around transcription start sites and have flexible DNA ends, suggesting that they form relaxed chromatin that allows transcription factor access. Histone H1 binds less efficiently to histone H3.Y-containing nucleosomes. Nucleosomes wrap and compact DNA into chromatin, limiting DNA accessibility to the cellular machineries which require DNA as a template. Histones thereby play a central role in transcription regulation, DNA repair, DNA replication and chromosomal stability. DNA accessibility is regulated via a complex set of post-translational modifications of histones, also called histone code, and nucleosome remodeling. The protein is Histone H3.Y of Homo sapiens (Human).